Consider the following 159-residue polypeptide: Transmembrane protein 88 (159 aa).

2 helical membrane passes run 43-63 (LLLL…MLGF) and 88-108 (FTAL…LALA).

Belongs to the TMEM88 family. As to quaternary structure, interacts (via C-terminus) with DVL1.

Its subcellular location is the cell membrane. In terms of biological role, inhibits the Wnt/beta-catenin signaling pathway. Crucial for heart development and acts downstream of GATA factors in the pre-cardiac mesoderm to specify lineage commitment of cardiomyocyte development. In Mus musculus (Mouse), this protein is Transmembrane protein 88 (Tmem88).